Consider the following 248-residue polypeptide: Transmembrane protein 223 (248 aa).

The next 3 membrane-spanning stretches (helical) occupy residues 46-68, 84-104, and 140-160; these read IFRP…AAVA, LLAI…HFAF, and YGFT…ALLF.

It belongs to the TMEM223 family.

Its subcellular location is the mitochondrion inner membrane. Functionally, mitochondrial ribosome-associated protein involved in the first steps of cytochrome c oxidase complex (complex IV) biogenesis. Stimulates the translation of MT-CO1 mRNA and is a constituent of early MT-CO1 assembly intermediates. In Danio rerio (Zebrafish), this protein is Transmembrane protein 223.